We begin with the raw amino-acid sequence, 332 residues long: Large ribosomal subunit protein uL10 (332 aa).

The interval 294–332 (QAAAAPVAVEDNTEEPEEEEEEEEDAAESAAAGLGALFG) is disordered. Residues 304–320 (DNTEEPEEEEEEEEDAA) show a composition bias toward acidic residues.

This sequence belongs to the universal ribosomal protein uL10 family. As to quaternary structure, part of the 50S ribosomal subunit. Forms part of the ribosomal stalk which helps the ribosome interact with GTP-bound translation factors. Forms a heptameric L10(L12)2(L12)2(L12)2 complex, where L10 forms an elongated spine to which the L12 dimers bind in a sequential fashion.

Functionally, forms part of the ribosomal stalk, playing a central role in the interaction of the ribosome with GTP-bound translation factors. This is Large ribosomal subunit protein uL10 from Methanosphaera stadtmanae (strain ATCC 43021 / DSM 3091 / JCM 11832 / MCB-3).